We begin with the raw amino-acid sequence, 277 residues long: Large ribosomal subunit protein uL2 (277 aa).

Disordered stretches follow at residues His-38–His-58 and Thr-219–Lys-277.

This sequence belongs to the universal ribosomal protein uL2 family. In terms of assembly, part of the 50S ribosomal subunit. Forms a bridge to the 30S subunit in the 70S ribosome.

Its function is as follows. One of the primary rRNA binding proteins. Required for association of the 30S and 50S subunits to form the 70S ribosome, for tRNA binding and peptide bond formation. It has been suggested to have peptidyltransferase activity; this is somewhat controversial. Makes several contacts with the 16S rRNA in the 70S ribosome. This is Large ribosomal subunit protein uL2 from Bacillus pumilus (strain SAFR-032).